Reading from the N-terminus, the 154-residue chain is MVKAVAVIRGDSKVSGTVTFEQANENTPTTISWNITGHDANAERGFHVHQFGDNTNGCTSAGPHFNPFGKTHGAPEDDERHVGDLGNFKTDAEGNAVGSKQDKLVKLIGAESVLGRTLVVHAGTDDLGRGGNEESKKTGNAGPRPACGVIGIAA.

Cu cation-binding residues include H47, H49, and H64. The cysteines at positions 58 and 147 are disulfide-linked. Positions 64, 72, 81, and 84 each coordinate Zn(2+). A Cu cation-binding site is contributed by H121. A compositionally biased stretch (basic and acidic residues) spans 125–137; it reads DDLGRGGNEESKK. A disordered region spans residues 125 to 147; the sequence is DDLGRGGNEESKKTGNAGPRPAC. R144 contacts substrate.

It belongs to the Cu-Zn superoxide dismutase family. As to quaternary structure, homodimer. Cu cation serves as cofactor. Requires Zn(2+) as cofactor.

Its subcellular location is the cytoplasm. The enzyme catalyses 2 superoxide + 2 H(+) = H2O2 + O2. In terms of biological role, destroys radicals which are normally produced within the cells and which are toxic to biological systems. The sequence is that of Superoxide dismutase [Cu-Zn] from Aspergillus niger (strain ATCC MYA-4892 / CBS 513.88 / FGSC A1513).